Reading from the N-terminus, the 321-residue chain is Methyltransferase cfoB (321 aa).

This sequence belongs to the methyltransferase superfamily.

The protein operates within secondary metabolite biosynthesis; flavonoid biosynthesis. Its function is as follows. Methyltransferase; part of the gene cluster that mediates the biosynthesis of chlorflavonin, a fungal flavonoid with acetolactate synthase inhibitory activity. Within the pathway, cfoB is responsible for the methylation at position C7-OH of flavonoid. The pathway begins with the PKS-NRPS hybrid synthetase cfoA that uses benzoic acid or p-hydroxybenzoic acid as a starter unit with four rounds of chain elongation using malonyl-CoA to form the chalcone skeleton. Then, a new type of chalcone isomerase, cfoK, catalyzes the conversion of the chalcone into a flavanone by a histidine-mediated oxa-Michael addition mechanism. The desaturation of flavanone to flavone is catalyzed by a new type of flavone synthase, the flavin mononucleotide (FMN)-dependent oxidoreductase cfoJ. Monooxygenases cfoF, cfoG, and P450 cfoH are responsible for the hydroxylation of the flavonoid skeleton at sites C3, C8, and C2', respectively. Like cfoF, the dehydratase cfoI also plays a role in the hydroxylation of position C3. Methyltransferases cfoB, cfoC, and cfoD then catalyze the methylation of C7-OH, C8-OH, and C3-OH, respectively. Finally, the monooxygenase cfoE is responsible for the chlorination of flavonoid at position C3'. This chain is Methyltransferase cfoB, found in Aspergillus candidus.